A 197-amino-acid chain; its full sequence is U1 small nuclear ribonucleoprotein C (197 aa).

A Matrin-type zinc finger spans residues 4–36 (YYCEYCDIYLTHSSPVGRRQHNQGRKHISAKIE). Positions 128–137 (FHNNKRINNI) are enriched in low complexity. The tract at residues 128–178 (FHNNKRINNIPKPYNNYTNKPITNSSYKNDKQDYRNNNESNDNMNSNNFSN) is disordered. Over residues 142–154 (NNYTNKPITNSSY) the composition is skewed to polar residues. Low complexity predominate over residues 164-178 (NNESNDNMNSNNFSN).

This sequence belongs to the U1 small nuclear ribonucleoprotein C family. In terms of assembly, U1 snRNP is composed of the 7 core Sm proteins B/B', D1, D2, D3, E, F and G that assemble in a heptameric protein ring on the Sm site of the small nuclear RNA to form the core snRNP, and at least 3 U1 snRNP-specific proteins U1-70K, U1-A and U1-C. U1-C interacts with U1 snRNA and the 5' splice-site region of the pre-mRNA.

Its subcellular location is the nucleus. Its function is as follows. Component of the spliceosomal U1 snRNP, which is essential for recognition of the pre-mRNA 5' splice-site and the subsequent assembly of the spliceosome. U1-C is directly involved in initial 5' splice-site recognition for both constitutive and regulated alternative splicing. The interaction with the 5' splice-site seems to precede base-pairing between the pre-mRNA and the U1 snRNA. Stimulates commitment or early (E) complex formation by stabilizing the base pairing of the 5' end of the U1 snRNA and the 5' splice-site region. The protein is U1 small nuclear ribonucleoprotein C (SNRPC) of Plasmodium berghei (strain Anka).